A 1207-amino-acid chain; its full sequence is DNA-directed RNA polymerase subunit beta' (1207 aa).

Zn(2+) contacts are provided by cysteine 60, cysteine 62, cysteine 75, and cysteine 78. Mg(2+) is bound by residues aspartate 449, aspartate 451, and aspartate 453. Positions 822, 896, 903, and 906 each coordinate Zn(2+).

It belongs to the RNA polymerase beta' chain family. As to quaternary structure, the RNAP catalytic core consists of 2 alpha, 1 beta, 1 beta' and 1 omega subunit. When a sigma factor is associated with the core the holoenzyme is formed, which can initiate transcription. Requires Mg(2+) as cofactor. The cofactor is Zn(2+).

It catalyses the reaction RNA(n) + a ribonucleoside 5'-triphosphate = RNA(n+1) + diphosphate. DNA-dependent RNA polymerase catalyzes the transcription of DNA into RNA using the four ribonucleoside triphosphates as substrates. This Staphylococcus aureus (strain NCTC 8325 / PS 47) protein is DNA-directed RNA polymerase subunit beta'.